The following is a 163-amino-acid chain: Nucleotide-binding protein all4662 (163 aa).

Belongs to the YajQ family.

Functionally, nucleotide-binding protein. The polypeptide is Nucleotide-binding protein all4662 (Nostoc sp. (strain PCC 7120 / SAG 25.82 / UTEX 2576)).